The sequence spans 620 residues: Proline--tRNA ligase (620 aa).

The protein belongs to the class-II aminoacyl-tRNA synthetase family. ProS type 1 subfamily. In terms of assembly, homodimer.

It is found in the cytoplasm. The catalysed reaction is tRNA(Pro) + L-proline + ATP = L-prolyl-tRNA(Pro) + AMP + diphosphate. Catalyzes the attachment of proline to tRNA(Pro) in a two-step reaction: proline is first activated by ATP to form Pro-AMP and then transferred to the acceptor end of tRNA(Pro). As ProRS can inadvertently accommodate and process non-cognate amino acids such as alanine and cysteine, to avoid such errors it has two additional distinct editing activities against alanine. One activity is designated as 'pretransfer' editing and involves the tRNA(Pro)-independent hydrolysis of activated Ala-AMP. The other activity is designated 'posttransfer' editing and involves deacylation of mischarged Ala-tRNA(Pro). The misacylated Cys-tRNA(Pro) is not edited by ProRS. This Streptococcus thermophilus (strain ATCC BAA-491 / LMD-9) protein is Proline--tRNA ligase.